The following is a 727-amino-acid chain: MDSDMDYERPNVETIKCVVVGDNAVGKTRLICARACNATLTQYQLLATHVPTVWAIDQYRVCQEVLERSRDVVDDVSVSLRLWDTFGDHHKDRRFAYGRSDVVVLCFSIANPNSLHHVKTMWYPEIKHFCPRAPVILVGCQLDLRYADLEAVNRARRPLARPIKPNEILPPEKGREVAKELGIPYYETSVVAQFGIKDVFDNAIRAALISRRHLQFWKSHLRNVQRPLLQAPFLPPKPPPPIIVVPDPPSSSEECPAHLLEDPLCADVILVLQERVRIFAHKIYLSTSSSKFYDLFLMDLSEGELGGPSEPGGTHPEDHQGHSDQHHHHHHHHHGRDFLLRAASFDVCESVDEAGGSGPAGLRASTSDGILRGNGTGYLPGRGRVLSSWSRAFVSIQEEMAEDPLTYKSRLMVVVKMDSSIQPGPFRAVLKYLYTGELDENERDLMHIAHIAELLEVFDLRMMVANILNNEAFMNQEITKAFHVRRTNRVKECLAKGTFSDVTFILDDGTISAHKPLLISSCDWMAAMFGGPFVESSTREVVFPYTSKSCMRAVLEYLYTGMFTSSPDLDDMKLIILANRLCLPHLVALTEQYTVTGLMEATQMMVDIDGDVLVFLELAQFHCAYQLADWCLHHICTNYNNVCRKFPRDMKAMSPENQEYFEKHRWPPVWYLKEEDHYQRARKEREKEDYLHLKRQPKRRWLFWNSPSSPSSSAASSSSPSSSSAVV.

Positions M1 to S210 are rho-like. GTP contacts are provided by residues G21–T28, D84–D88, and C140–D143. BTB domains are found at residues A266–E442 and S500–P567. Residues E304 to H333 form a disordered region. Residues H315–D324 are compositionally biased toward basic and acidic residues. The tract at residues F703 to V727 is disordered. A compositionally biased stretch (low complexity) spans S706–V727.

It belongs to the small GTPase superfamily. Rho family. As to quaternary structure, interacts with HSP90AA1 and HSP90AB1. Forms a complex with CUL3 and RBX1. Interacts (via BTB 1 domain) with CUL3. Interacts with MSI2. Post-translationally, autoubiquitinated by RHOBTB2-CUL3-RBX1 ubiquitin ligase complex. As to expression, ubiquitous, with highest levels in neural tissues. Expression is also detected in fetal lung, heart, and brain.

Regulator of cell proliferation and apoptosis. It likely functions as a substrate-adapter that recruits key substrates, e.g. MSI2, to CUL3-based ubiquitin ligase complexes for degradation. Required for MSI2 ubiquitination and degradation. The sequence is that of Rho-related BTB domain-containing protein 2 (RHOBTB2) from Homo sapiens (Human).